Reading from the N-terminus, the 282-residue chain is Nicotianamine synthase-like 5 protein (282 aa).

It belongs to the nicotianamine synthase (NAS)-like family.

The polypeptide is Nicotianamine synthase-like 5 protein (NAS5) (Hordeum vulgare (Barley)).